The following is a 215-amino-acid chain: Ras-related protein SEC4 (215 aa).

27 to 34 (GDSGVGKS) contributes to the GTP binding site. An Effector region motif is present at residues 49 to 57 (FITTIGIDF). Residues 75–79 (DTAGQ) and 133–136 (NKSD) each bind GTP. 2 positions are modified to phosphoserine: S201 and S204. 2 S-geranylgeranyl cysteine lipidation sites follow: C214 and C215.

It belongs to the small GTPase superfamily. Rab family. In terms of assembly, interacts with the guanyl-nucleotide exchange factor SEC2. Interacts with SRO7, YIF1, YIP3, YIP4 and YIP5.

Its subcellular location is the cytoplasmic vesicle. The protein resides in the secretory vesicle membrane. It is found in the cell membrane. It localises to the cytoplasm. Functionally, involved in exocytosis. Maybe by regulating the binding and fusion of secretory vesicles with the cell surface. The GTP-bound form of SEC4 may interact with an effector, thereby stimulating its activity and leading to exocytotic fusion. SEC4 may be an upstream activator of the 19.5S SEC8/SEC15 particle. SEC4 probably interacts directly with SEC8; it could serve as the attachment site for the SEC8/SEC15 particle. In Saccharomyces cerevisiae (strain ATCC 204508 / S288c) (Baker's yeast), this protein is Ras-related protein SEC4 (SEC4).